Reading from the N-terminus, the 290-residue chain is Light-independent protochlorophyllide reductase iron-sulfur ATP-binding protein (290 aa).

ATP contacts are provided by residues 10–15 (GIGKST) and K39. S14 lines the Mg(2+) pocket. [4Fe-4S] cluster is bound by residues C95 and C129. 180 to 181 (NR) serves as a coordination point for ATP.

The protein belongs to the NifH/BchL/ChlL family. Homodimer. Protochlorophyllide reductase is composed of three subunits; ChlL, ChlN and ChlB. The cofactor is [4Fe-4S] cluster.

It localises to the plastid. The protein localises to the chloroplast. It catalyses the reaction chlorophyllide a + oxidized 2[4Fe-4S]-[ferredoxin] + 2 ADP + 2 phosphate = protochlorophyllide a + reduced 2[4Fe-4S]-[ferredoxin] + 2 ATP + 2 H2O. The protein operates within porphyrin-containing compound metabolism; chlorophyll biosynthesis (light-independent). Its function is as follows. Component of the dark-operative protochlorophyllide reductase (DPOR) that uses Mg-ATP and reduced ferredoxin to reduce ring D of protochlorophyllide (Pchlide) to form chlorophyllide a (Chlide). This reaction is light-independent. The L component serves as a unique electron donor to the NB-component of the complex, and binds Mg-ATP. This is Light-independent protochlorophyllide reductase iron-sulfur ATP-binding protein from Zygnema circumcarinatum (Green alga).